We begin with the raw amino-acid sequence, 431 residues long: Histidine--tRNA ligase (431 aa).

It belongs to the class-II aminoacyl-tRNA synthetase family. In terms of assembly, homodimer.

It is found in the cytoplasm. The enzyme catalyses tRNA(His) + L-histidine + ATP = L-histidyl-tRNA(His) + AMP + diphosphate + H(+). This Levilactobacillus brevis (strain ATCC 367 / BCRC 12310 / CIP 105137 / JCM 1170 / LMG 11437 / NCIMB 947 / NCTC 947) (Lactobacillus brevis) protein is Histidine--tRNA ligase.